The primary structure comprises 181 residues: Adenine phosphoribosyltransferase (181 aa).

Belongs to the purine/pyrimidine phosphoribosyltransferase family. In terms of assembly, homodimer.

The protein localises to the cytoplasm. It catalyses the reaction AMP + diphosphate = 5-phospho-alpha-D-ribose 1-diphosphate + adenine. It participates in purine metabolism; AMP biosynthesis via salvage pathway; AMP from adenine: step 1/1. Functionally, catalyzes a salvage reaction resulting in the formation of AMP, that is energically less costly than de novo synthesis. This is Adenine phosphoribosyltransferase from Aliivibrio fischeri (strain ATCC 700601 / ES114) (Vibrio fischeri).